The chain runs to 240 residues: Mitochondrial inner membrane protease ATP23 (240 aa).

Residue His140 participates in a divalent metal cation binding. Glu141 is a catalytic residue. His144 is an a divalent metal cation binding site.

The protein belongs to the peptidase M76 family.

Its subcellular location is the mitochondrion inner membrane. Has a dual role in the assembly of mitochondrial ATPase. Acts as a protease that removes N-terminal residues of mitochondrial ATPase CF(0) subunit 6 at the intermembrane space side. Also involved in the correct assembly of the membrane-embedded ATPase CF(0) particle, probably mediating association of subunit 6 with the subunit 9 ring. This chain is Mitochondrial inner membrane protease ATP23 (ATP23), found in Scheffersomyces stipitis (strain ATCC 58785 / CBS 6054 / NBRC 10063 / NRRL Y-11545) (Yeast).